The primary structure comprises 92 residues: Putative pterin-4-alpha-carbinolamine dehydratase (92 aa).

It belongs to the pterin-4-alpha-carbinolamine dehydratase family.

It catalyses the reaction (4aS,6R)-4a-hydroxy-L-erythro-5,6,7,8-tetrahydrobiopterin = (6R)-L-erythro-6,7-dihydrobiopterin + H2O. The polypeptide is Putative pterin-4-alpha-carbinolamine dehydratase (Natronomonas pharaonis (strain ATCC 35678 / DSM 2160 / CIP 103997 / JCM 8858 / NBRC 14720 / NCIMB 2260 / Gabara) (Halobacterium pharaonis)).